Here is a 659-residue protein sequence, read N- to C-terminus: Exoribonuclease 2 (659 aa).

Residues 189 to 532 form the RNB domain; that stretch reads REDLTHLYFT…HRLIKQVLSN (344 aa). Residues 576–658 enclose the S1 motif domain; that stretch reads NVEFDGEIQD…ETRSVVGDVL (83 aa).

Belongs to the RNR ribonuclease family. RNase II subfamily.

The protein resides in the cytoplasm. It catalyses the reaction Exonucleolytic cleavage in the 3'- to 5'-direction to yield nucleoside 5'-phosphates.. Its function is as follows. Involved in mRNA degradation. Hydrolyzes single-stranded polyribonucleotides processively in the 3' to 5' direction. The polypeptide is Exoribonuclease 2 (Glaesserella parasuis serovar 5 (strain SH0165) (Haemophilus parasuis)).